The chain runs to 245 residues: NADH-quinone oxidoreductase subunit C (245 aa).

Residues 1-10 show a composition bias toward basic and acidic residues; it reads MSAPQDRTDD. Disordered stretches follow at residues 1–54 and 216–245; these read MSAP…GYGG and PQRKDYPLGGVPVEYKGAEIPPPDRRRSYQ. The segment covering 11–28 has biased composition (low complexity); the sequence is GGVPVPVTPAGATGGAPA. The segment covering 39–54 has biased composition (gly residues); that stretch reads GMFGDQGTGDVSGYGG.

The protein belongs to the complex I 30 kDa subunit family. In terms of assembly, NDH-1 is composed of 14 different subunits. Subunits NuoB, C, D, E, F, and G constitute the peripheral sector of the complex.

It is found in the cell membrane. It catalyses the reaction a quinone + NADH + 5 H(+)(in) = a quinol + NAD(+) + 4 H(+)(out). In terms of biological role, NDH-1 shuttles electrons from NADH, via FMN and iron-sulfur (Fe-S) centers, to quinones in the respiratory chain. The immediate electron acceptor for the enzyme in this species is believed to be a menaquinone. Couples the redox reaction to proton translocation (for every two electrons transferred, four hydrogen ions are translocated across the cytoplasmic membrane), and thus conserves the redox energy in a proton gradient. In Salinispora tropica (strain ATCC BAA-916 / DSM 44818 / JCM 13857 / NBRC 105044 / CNB-440), this protein is NADH-quinone oxidoreductase subunit C.